The chain runs to 437 residues: Enolase (437 aa).

Gln162 serves as a coordination point for (2R)-2-phosphoglycerate. The active-site Proton donor is Glu204. Mg(2+) contacts are provided by Asp251, Glu297, and Asp324. (2R)-2-phosphoglycerate-binding residues include Lys349, Arg378, Ser379, and Lys400. The active-site Proton acceptor is Lys349.

The protein belongs to the enolase family. The cofactor is Mg(2+).

Its subcellular location is the cytoplasm. It is found in the secreted. The protein resides in the cell surface. The enzyme catalyses (2R)-2-phosphoglycerate = phosphoenolpyruvate + H2O. It functions in the pathway carbohydrate degradation; glycolysis; pyruvate from D-glyceraldehyde 3-phosphate: step 4/5. Its function is as follows. Catalyzes the reversible conversion of 2-phosphoglycerate (2-PG) into phosphoenolpyruvate (PEP). It is essential for the degradation of carbohydrates via glycolysis. The chain is Enolase from Pelodictyon phaeoclathratiforme (strain DSM 5477 / BU-1).